We begin with the raw amino-acid sequence, 337 residues long: Membrane-spanning 4-domains subfamily A member 18 (337 aa).

Positions 101–121 (LGTTDLQTQPGGPQNPPTCAP) are disordered. Helical transmembrane passes span 155-175 (LGAI…NPSL), 183-203 (AISG…SLSV), 220-240 (MNVV…VDLI), and 252-272 (GGLL…SHFG).

Belongs to the MS4A family.

Its subcellular location is the membrane. The chain is Membrane-spanning 4-domains subfamily A member 18 (MS4A18) from Bos taurus (Bovine).